The primary structure comprises 957 residues: Glycine dehydrogenase (decarboxylating) (957 aa).

At Lys708 the chain carries N6-(pyridoxal phosphate)lysine.

It belongs to the GcvP family. As to quaternary structure, the glycine cleavage system is composed of four proteins: P, T, L and H. Pyridoxal 5'-phosphate is required as a cofactor.

It catalyses the reaction N(6)-[(R)-lipoyl]-L-lysyl-[glycine-cleavage complex H protein] + glycine + H(+) = N(6)-[(R)-S(8)-aminomethyldihydrolipoyl]-L-lysyl-[glycine-cleavage complex H protein] + CO2. Its function is as follows. The glycine cleavage system catalyzes the degradation of glycine. The P protein binds the alpha-amino group of glycine through its pyridoxal phosphate cofactor; CO(2) is released and the remaining methylamine moiety is then transferred to the lipoamide cofactor of the H protein. This is Glycine dehydrogenase (decarboxylating) from Escherichia coli O157:H7.